The primary structure comprises 51 residues: Large ribosomal subunit protein bL33 (51 aa).

The protein belongs to the bacterial ribosomal protein bL33 family.

This Acidithiobacillus ferrooxidans (strain ATCC 53993 / BNL-5-31) (Leptospirillum ferrooxidans (ATCC 53993)) protein is Large ribosomal subunit protein bL33.